The primary structure comprises 482 residues: Dual specificity protein phosphatase 10 (482 aa).

One can recognise a Rhodanese domain in the interval 168 to 285 (PSQGPVIIDC…FKQNHENLCD (118 aa)). Residues 199-215 (KISRRRLQQGKITVLDL) are interaction with MAP kinases. Positions 321–464 (ELTPILPFLF…LLEFEEDLNN (144 aa)) constitute a Tyrosine-protein phosphatase domain. The Phosphocysteine intermediate role is filled by C408.

It belongs to the protein-tyrosine phosphatase family. Non-receptor class dual specificity subfamily. In terms of assembly, monomer. Interacts with MAPK14. As to expression, expressed in keratinocytes (at protein level). Detected in brain.

The protein localises to the cytoplasm. Its subcellular location is the nucleus. It carries out the reaction O-phospho-L-tyrosyl-[protein] + H2O = L-tyrosyl-[protein] + phosphate. The enzyme catalyses O-phospho-L-seryl-[protein] + H2O = L-seryl-[protein] + phosphate. It catalyses the reaction O-phospho-L-threonyl-[protein] + H2O = L-threonyl-[protein] + phosphate. Protein phosphatase involved in the inactivation of MAP kinases. Has a specificity for the MAPK11/MAPK12/MAPK13/MAPK14 subfamily. It preferably dephosphorylates p38. The polypeptide is Dual specificity protein phosphatase 10 (DUSP10) (Homo sapiens (Human)).